The sequence spans 542 residues: MRLDTNSNVDFKAFESSSSSSSCLVKLDNLATWGGSQKTDTRLPITDYSTLGGPRHNRSPFPLSKDVNNRLVIWDGDMTTLDVDAITNTSDETLTESNIISERILAVAGNQLREELSTNVKECRTGDVRITRGYNLPAKYVLHTVAPTYREKFKTAAENTLHCCYRNVLCKAKELNLHTIALCNISVHQKSFPADVAAHIALRTIRRYLDKCTLQVVILCVNSNERGTYEVLAPLYFPRDQLEERSALWQLPKDIGGEFGEPQHPDPDRQIRIIRNPQHSVHMRHGHTDDDSDVSPHDMEGNSSDLEYGAKDMNGLSPNSYSSGLQTQLQRDLDRQHLLSDRPRAGVYENVISEGVEGIEHQERYERLLRRAQVEDLTEVSGIGCLYQSGVDRLGRPVIVFCGKWFPAQNIDLEKALLYLIKLLDPIVKGDYVISYFHTLTSTNNYPSLHWLREVYSVLPYKYKKNLKAFYIVHPTFWTKMMTWWFTTFMAPAIKAKVHSLPGVEHLYSAITKDQLEIPAYITEYDMATNGLHYFNPVPTAS.

The 180-residue stretch at 58-237 folds into the Macro domain; the sequence is RSPFPLSKDV…TYEVLAPLYF (180 aa). The disordered stretch occupies residues 277-304; that stretch reads PQHSVHMRHGHTDDDSDVSPHDMEGNSS. The span at 286-300 shows a compositional bias: basic and acidic residues; the sequence is GHTDDDSDVSPHDME. The region spanning 373–530 is the CRAL-TRIO domain; it reads QVEDLTEVSG…YITEYDMATN (158 aa).

It belongs to the GDAP2 family.

The sequence is that of Protein GDAP2 homolog from Drosophila pseudoobscura pseudoobscura (Fruit fly).